Consider the following 144-residue polypeptide: D-aminoacyl-tRNA deacylase (144 aa).

Residues 136–137 (GP) carry the Gly-cisPro motif, important for rejection of L-amino acids motif.

The protein belongs to the DTD family. Homodimer.

The protein resides in the cytoplasm. It catalyses the reaction glycyl-tRNA(Ala) + H2O = tRNA(Ala) + glycine + H(+). It carries out the reaction a D-aminoacyl-tRNA + H2O = a tRNA + a D-alpha-amino acid + H(+). Functionally, an aminoacyl-tRNA editing enzyme that deacylates mischarged D-aminoacyl-tRNAs. Also deacylates mischarged glycyl-tRNA(Ala), protecting cells against glycine mischarging by AlaRS. Acts via tRNA-based rather than protein-based catalysis; rejects L-amino acids rather than detecting D-amino acids in the active site. By recycling D-aminoacyl-tRNA to D-amino acids and free tRNA molecules, this enzyme counteracts the toxicity associated with the formation of D-aminoacyl-tRNA entities in vivo and helps enforce protein L-homochirality. The polypeptide is D-aminoacyl-tRNA deacylase (Mannheimia succiniciproducens (strain KCTC 0769BP / MBEL55E)).